Here is a 77-residue protein sequence, read N- to C-terminus: Small ribosomal subunit protein uS17 (77 aa).

The protein belongs to the universal ribosomal protein uS17 family. In terms of assembly, part of the 30S ribosomal subunit.

In terms of biological role, one of the primary rRNA binding proteins, it binds specifically to the 5'-end of 16S ribosomal RNA. The sequence is that of Small ribosomal subunit protein uS17 from Anaplasma marginale (strain St. Maries).